A 441-amino-acid chain; its full sequence is 3-oxo-glucose-6-phosphate:glutamate aminotransferase (441 aa).

98–99 (TS) contributes to the substrate binding site. A pyridoxal 5'-phosphate-binding site is contributed by 125-126 (GT). F151 contacts substrate. Pyridoxal 5'-phosphate contacts are provided by Q225 and S242. 244–246 (NPY) contributes to the substrate binding site. The residue at position 247 (K247) is an N6-(pyridoxal phosphate)lysine. Residues Y274 and K282 each coordinate substrate. N292 serves as a coordination point for pyridoxal 5'-phosphate. Y379 contributes to the substrate binding site.

The protein belongs to the DegT/DnrJ/EryC1 family. In terms of assembly, homodimer. It depends on pyridoxal 5'-phosphate as a cofactor.

The enzyme catalyses 3-dehydro-D-glucose 6-phosphate + L-glutamate = D-kanosamine 6-phosphate + 2-oxoglutarate. Its pathway is antibiotic biosynthesis; kanosamine biosynthesis. Its function is as follows. Involved in the biosynthesis of kanosamine (3-amino-3-deoxy-D-glucose), which is known to have antibiotic and antifungal properties, and to be a precursor of the antibiotic neotrehalosadiamine (3,3'-diamino-3,3'-dideoxy-alpha,beta-trehalose (NTD)). Catalyzes the reversible pyridoxal phosphate-dependent transamination of 3-dehydro-alpha-D-glucose 6-phosphate to form alpha-D-kanosamine-6-phosphate. It can only use alpha-anomer and glutamate is the only amino donor. The chain is 3-oxo-glucose-6-phosphate:glutamate aminotransferase (ntdA) from Bacillus subtilis (strain 168).